A 47-amino-acid chain; its full sequence is PhoP/PhoQ regulator MgrB (47 aa).

A helical membrane pass occupies residues W6–I26.

Belongs to the MgrB family. As to quaternary structure, may form homooligomers. Probably interacts with the periplasmic domain of PhoQ.

The protein localises to the cell inner membrane. Functionally, phoP-regulated transcription is redox-sensitive, being activated when the periplasm becomes more reducing. MgrB acts between DsbA/DsbB and PhoP/PhoQ in this pathway. Represses PhoP/PhoQ signaling, possibly by binding to the periplasmic domain of PhoQ, altering its activity and that of downstream effector PhoP. This Citrobacter koseri (strain ATCC BAA-895 / CDC 4225-83 / SGSC4696) protein is PhoP/PhoQ regulator MgrB.